Consider the following 160-residue polypeptide: Cytochrome b6-f complex subunit 4 (160 aa).

The next 3 helical transmembrane spans lie at 36-56 (LLYI…GLAV), 95-115 (LLGI…PFIE), and 128-148 (IAMA…IGAC).

Belongs to the cytochrome b family. PetD subfamily. In terms of assembly, the 4 large subunits of the cytochrome b6-f complex are cytochrome b6, subunit IV (17 kDa polypeptide, PetD), cytochrome f and the Rieske protein, while the 4 small subunits are PetG, PetL, PetM and PetN. The complex functions as a dimer.

The protein localises to the cellular thylakoid membrane. In terms of biological role, component of the cytochrome b6-f complex, which mediates electron transfer between photosystem II (PSII) and photosystem I (PSI), cyclic electron flow around PSI, and state transitions. The sequence is that of Cytochrome b6-f complex subunit 4 from Prochlorococcus marinus (strain MIT 9313).